The sequence spans 165 residues: uncharacterized protein (165 aa).

This is an uncharacterized protein from Acanthamoeba polyphaga mimivirus (APMV).